Here is a 93-residue protein sequence, read N- to C-terminus: Small ribosomal subunit protein uS15 (93 aa).

It belongs to the universal ribosomal protein uS15 family. In terms of assembly, part of the 30S ribosomal subunit. Forms a bridge to the 50S subunit in the 70S ribosome, contacting the 23S rRNA.

In terms of biological role, one of the primary rRNA binding proteins, it binds directly to 16S rRNA where it helps nucleate assembly of the platform of the 30S subunit by binding and bridging several RNA helices of the 16S rRNA. Forms an intersubunit bridge (bridge B4) with the 23S rRNA of the 50S subunit in the ribosome. The sequence is that of Small ribosomal subunit protein uS15 from Ehrlichia ruminantium (strain Gardel).